The sequence spans 245 residues: Chloride intracellular channel protein 2 (245 aa).

Residues 1 to 96 form a required for insertion into the membrane region; it reads MASLALNTQA…EEFLEKTLAP (96 aa). Glu25 lines the glutathione pocket. A G-site motif is present at residues 30–33; sequence CPFC. Cys30 and Cys33 form a disulfide bridge. A helical transmembrane segment spans residues 32-52; the sequence is FCQRLFMILWLKGVKFNVTTI. The GST C-terminal domain occupies 76–239; that stretch reads NKELKTDFIK…PEDKEIENTY (164 aa). His227 contributes to the glutathione binding site.

Belongs to the chloride channel CLIC family. Monomer. Interacts with TRAPPC2 and RYR2.

Its subcellular location is the cytoplasm. The protein localises to the membrane. The enzyme catalyses chloride(in) = chloride(out). It carries out the reaction tert-butyl hydroperoxide + 2 glutathione = tert-butanol + glutathione disulfide + H2O. It catalyses the reaction cumene hydroperoxide + 2 glutathione = 2-phenylpropan-2-ol + glutathione disulfide + H2O. Functionally, in the soluble state, catalyzes glutaredoxin-like thiol disulfide exchange reactions with reduced glutathione as electron donor. Displays weak glutathione peroxidase activity. Can insert into membranes and form chloride ion channels. Membrane insertion seems to be redox-regulated and may occur only under oxidizing conditions. Modulates the activity of RYR2 and inhibits calcium influx. The polypeptide is Chloride intracellular channel protein 2 (Rattus norvegicus (Rat)).